A 410-amino-acid chain; its full sequence is Replication factor C large subunit (410 aa).

ATP is bound at residue 46-53 (GDPGTGKT).

The protein belongs to the activator 1 small subunits family. RfcL subfamily. As to quaternary structure, heteromultimer composed of small subunits (RfcS) and large subunits (RfcL).

Its function is as follows. Part of the RFC clamp loader complex which loads the PCNA sliding clamp onto DNA. This Picrophilus torridus (strain ATCC 700027 / DSM 9790 / JCM 10055 / NBRC 100828 / KAW 2/3) protein is Replication factor C large subunit.